A 119-amino-acid polypeptide reads, in one-letter code: Large ribosomal subunit protein bL20 (119 aa).

This sequence belongs to the bacterial ribosomal protein bL20 family.

Its function is as follows. Binds directly to 23S ribosomal RNA and is necessary for the in vitro assembly process of the 50S ribosomal subunit. It is not involved in the protein synthesizing functions of that subunit. In Brevibacillus brevis (strain 47 / JCM 6285 / NBRC 100599), this protein is Large ribosomal subunit protein bL20.